We begin with the raw amino-acid sequence, 369 residues long: GTPase Obg (369 aa).

The region spanning 1–159 is the Obg domain; the sequence is MKFIDEAKIE…RELRLELKVL (159 aa). Residues 128-148 form a disordered region; it reads IHFKSSTNRAPRQKSEGKEGE. Positions 160–333 constitute an OBG-type G domain; the sequence is ADIGLLGMPN…LVTEIYDYIA (174 aa). Residues 166 to 173, 191 to 195, 213 to 216, 283 to 286, and 314 to 316 each bind GTP; these read GMPNAGKS, FTTLH, DIPG, NKLD, and SAL. Residues S173 and T193 each coordinate Mg(2+).

It belongs to the TRAFAC class OBG-HflX-like GTPase superfamily. OBG GTPase family. As to quaternary structure, monomer. The cofactor is Mg(2+).

The protein resides in the cytoplasm. An essential GTPase which binds GTP, GDP and possibly (p)ppGpp with moderate affinity, with high nucleotide exchange rates and a fairly low GTP hydrolysis rate. Plays a role in control of the cell cycle, stress response, ribosome biogenesis and in those bacteria that undergo differentiation, in morphogenesis control. This Herminiimonas arsenicoxydans protein is GTPase Obg.